The sequence spans 474 residues: MFVVSEMADFIKAGGLGDVAAALPRALRHRYDVRVLIPGYRAVLARAGKVEIVGRVLAHAALPACDIGRIVQSDGLPIYILLSKELFERDGSPYVSTSGSEFEDNAIRFATLSHAAAQIAAGRAGLGWRPRLLHLNDWPCALAAAYVRWSGGTTPCLLTIHNLAYQGLVPYSMAAALGIPAERVSELEFYGQMSFLRGGIVHADHVNTVSVSYAQQITGPAQGCGLDRLLAGRAAKGALSGIVNGIDASWDPRTDEYLDSHFSVNHWQGRQANAAQVRKAFGLRESTGPLFAVVSRLVHQKGLDLICEVAPQIVAAGGQIAVIGGGEPEIEQQVAELTRRYPGQVGAFIGFEEGLARRMFAGADFLLMPSRFEPCGLSQMYAQRFGCLPIAHATGGLIDTVDDGVTGFLFQQASAEALRRCLERAFRTFRLPSLLSAMRRAAMLRPSGWDVAGKKYISLYERTAATAPAVATVS.

Lysine 12 is a binding site for ADP-alpha-D-glucose.

It belongs to the glycosyltransferase 1 family. Bacterial/plant glycogen synthase subfamily.

It carries out the reaction [(1-&gt;4)-alpha-D-glucosyl](n) + ADP-alpha-D-glucose = [(1-&gt;4)-alpha-D-glucosyl](n+1) + ADP + H(+). It functions in the pathway glycan biosynthesis; glycogen biosynthesis. Its function is as follows. Synthesizes alpha-1,4-glucan chains using ADP-glucose. This is Glycogen synthase from Xanthomonas campestris pv. campestris (strain 8004).